The chain runs to 431 residues: Arginine biosynthesis bifunctional protein ArgJ, mitochondrial (431 aa).

Substrate contacts are provided by threonine 174, lysine 200, threonine 211, glutamate 297, asparagine 426, and threonine 431. The Nucleophile role is filled by threonine 211.

It belongs to the ArgJ family. As to quaternary structure, heterodimer of an alpha and a beta chain. In terms of processing, the alpha and beta chains are autoproteolytically processed from a single precursor protein within the mitochondrion.

It localises to the mitochondrion matrix. The catalysed reaction is N(2)-acetyl-L-ornithine + L-glutamate = N-acetyl-L-glutamate + L-ornithine. The enzyme catalyses L-glutamate + acetyl-CoA = N-acetyl-L-glutamate + CoA + H(+). The protein operates within amino-acid biosynthesis; L-arginine biosynthesis; L-ornithine and N-acetyl-L-glutamate from L-glutamate and N(2)-acetyl-L-ornithine (cyclic): step 1/1. It participates in amino-acid biosynthesis; L-arginine biosynthesis; N(2)-acetyl-L-ornithine from L-glutamate: step 1/4. Functionally, catalyzes two activities which are involved in the cyclic version of arginine biosynthesis: the synthesis of acetylglutamate from glutamate and acetyl-CoA, and of ornithine by transacetylation between acetylornithine and glutamate. The chain is Arginine biosynthesis bifunctional protein ArgJ, mitochondrial from Yarrowia lipolytica (strain CLIB 122 / E 150) (Yeast).